The following is a 129-amino-acid chain: Iron-sulfur cluster assembly 1 homolog, mitochondrial (129 aa).

The transit peptide at 1-12 directs the protein to the mitochondrion; that stretch reads MSASLVRATVRA. Residues Cys-57, Cys-121, and Cys-123 each contribute to the Fe cation site.

Belongs to the HesB/IscA family. In terms of assembly, interacts with CRY2, but not with CRY1 (in vitro).

The protein localises to the mitochondrion. Involved in the maturation of mitochondrial 4Fe-4S proteins functioning late in the iron-sulfur cluster assembly pathway. Probably involved in the binding of an intermediate of Fe/S cluster assembly. In Mus musculus (Mouse), this protein is Iron-sulfur cluster assembly 1 homolog, mitochondrial (Isca1).